A 387-amino-acid polypeptide reads, in one-letter code: Succinyl-diaminopimelate desuccinylase (387 aa).

Zn(2+) is bound at residue His74. Asp76 is a catalytic residue. Residue Asp107 participates in Zn(2+) binding. The active-site Proton acceptor is the Glu142. 3 residues coordinate Zn(2+): Glu143, Glu171, and His360.

This sequence belongs to the peptidase M20A family. DapE subfamily. In terms of assembly, homodimer. The cofactor is Zn(2+). It depends on Co(2+) as a cofactor.

It catalyses the reaction N-succinyl-(2S,6S)-2,6-diaminopimelate + H2O = (2S,6S)-2,6-diaminopimelate + succinate. It participates in amino-acid biosynthesis; L-lysine biosynthesis via DAP pathway; LL-2,6-diaminopimelate from (S)-tetrahydrodipicolinate (succinylase route): step 3/3. In terms of biological role, catalyzes the hydrolysis of N-succinyl-L,L-diaminopimelic acid (SDAP), forming succinate and LL-2,6-diaminopimelate (DAP), an intermediate involved in the bacterial biosynthesis of lysine and meso-diaminopimelic acid, an essential component of bacterial cell walls. This chain is Succinyl-diaminopimelate desuccinylase, found in Rhodopseudomonas palustris (strain BisA53).